The following is a 610-amino-acid chain: Diol dehydratase-reactivating factor large subunit (610 aa).

11–13 (NSS) contributes to the ATP binding site. Mg(2+) is bound by residues Thr105, Asp166, and Asp183. ATP is bound by residues 459 to 462 (EEIK), 557 to 558 (GS), and Arg591.

It belongs to the DdrA/PduG family. As to quaternary structure, component of the DDR complex, a heterotetramer of DdrA(2)/DdrB(2). The DDR complex interacts with the diol dehydratase complex in the presence of ADP but not ATP. The cofactor is Mg(2+).

The catalysed reaction is ATP + H2O = ADP + phosphate + H(+). Functionally, large subunit of the diol dehydratase-reactivating factor (DDR), which reactivates suicidally inhibited adenosylcobalamin-dependent diol dehydratase (DD, pddA, pddB, pddC). DDR acts as a chaperone, reactivating inactivated DD holoenzyme in the presence of ATP, Mg(2+) and free adenosylcobalamin (AdoCbl), by mediating the exchange of the tightly bound damaged cofactor AdoCbl for a free intact one. Reactivation takes place in two steps: ADP-dependent cobalamin release, then ATP-dependent dissociation of the DD apoenzyme-DDR complex. DDR has weak ATPase activity which is required for DD reactivation. This subunit contains the adenosine nucleotide binding site. Activates glycerol-inactivated, O2-inactivated holoenzyme and inactivated enzyme-cyanocobalamin complex. Also reactivates glycerol-inactivated hologlycerol dehydratase, a DD isozyme. This Klebsiella michiganensis (strain ATCC 8724 / DSM 4798 / JCM 20051 / NBRC 3318 / NRRL B-199 / KCTC 1686 / BUCSAV 143 / CCM 1901) protein is Diol dehydratase-reactivating factor large subunit.